The sequence spans 1183 residues: Probable RNA-dependent RNA polymerase 4 (1183 aa).

Belongs to the RdRP family. As to expression, expressed in shoot apical meristem (SAM) and panicles.

The catalysed reaction is RNA(n) + a ribonucleoside 5'-triphosphate = RNA(n+1) + diphosphate. Its function is as follows. Probably involved in the RNA silencing pathway and required for the generation of small interfering RNAs (siRNAs). In Oryza sativa subsp. japonica (Rice), this protein is Probable RNA-dependent RNA polymerase 4 (RDR4).